A 504-amino-acid chain; its full sequence is D-alanine--D-alanyl carrier protein ligase (504 aa).

Position 152–153 (152–153) interacts with ATP; the sequence is TS. A D-alanine-binding site is contributed by aspartate 197. Position 292–297 (292–297) interacts with ATP; sequence NTYGPT. Valine 301 lines the D-alanine pocket. Residues aspartate 383, 394–397, and lysine 492 contribute to the ATP site; that span reads YNGR. Position 492 (lysine 492) interacts with D-alanine.

The protein belongs to the ATP-dependent AMP-binding enzyme family. DltA subfamily.

The protein resides in the cytoplasm. The enzyme catalyses holo-[D-alanyl-carrier protein] + D-alanine + ATP = D-alanyl-[D-alanyl-carrier protein] + AMP + diphosphate. It participates in cell wall biogenesis; lipoteichoic acid biosynthesis. Functionally, catalyzes the first step in the D-alanylation of lipoteichoic acid (LTA), the activation of D-alanine and its transfer onto the D-alanyl carrier protein (Dcp) DltC. In an ATP-dependent two-step reaction, forms a high energy D-alanyl-AMP intermediate, followed by transfer of the D-alanyl residue as a thiol ester to the phosphopantheinyl prosthetic group of the Dcp. D-alanylation of LTA plays an important role in modulating the properties of the cell wall in Gram-positive bacteria, influencing the net charge of the cell wall. This chain is D-alanine--D-alanyl carrier protein ligase, found in Bacillus cereus (strain G9842).